The primary structure comprises 563 residues: Beta-catenin-like protein 1 (563 aa).

Met-1 bears the N-acetylmethionine mark. A disordered region spans residues Met-1–Val-49. The Nuclear localization signal motif lies at Lys-16–Thr-33. Positions Gly-34 to Glu-45 are enriched in basic and acidic residues. HEAT repeat units lie at residues Glu-79 to Thr-129 and Tyr-134 to Glu-176. The residue at position 91 (Lys-91) is an N6-acetyllysine. Positions Met-130 to Leu-140 match the Nuclear export signal (NES) motif. 5 ARM repeats span residues Glu-178–Phe-228, Arg-229–Asn-273, Asp-274–Leu-323, Ser-325–Gly-363, and Pro-364–Asn-417. Residue Ser-389 is modified to Phosphoserine. Residues Asp-476–Ile-540 adopt a coiled-coil conformation. Residue Ser-545 is modified to Phosphoserine.

As to quaternary structure, component of the PRP19-CDC5L splicing complex composed of a core complex comprising a homotetramer of PRPF19, CDC5L, PLRG1 and BCAS2, and at least three less stably associated proteins CTNNBL1, CWC15 and HSPA8. Interacts directly with CWC15 and CDC5L in the complex. Interacts with AICDA; the interaction is important for the antibody diversification activity of AICDA. Interacts with PRPF31 (via its NLS). Interacts (via its N-terminal NLS) with KPNA1 and KPNA2. As to expression, widely expressed with highest levels in skeletal muscle, placenta, heart, spleen, testis and thyroid.

The protein resides in the nucleus. The protein localises to the cytoplasm. Its function is as follows. Component of the PRP19-CDC5L complex that forms an integral part of the spliceosome and is required for activating pre-mRNA splicing. Participates in AID/AICDA-mediated somatic hypermutation (SHM) and class-switch recombination (CSR), 2 processes resulting in the production of high-affinity, mutated isotype-switched antibodies. The chain is Beta-catenin-like protein 1 (CTNNBL1) from Homo sapiens (Human).